The primary structure comprises 596 residues: DNA primase (596 aa).

A CHC2-type zinc finger spans residues 41-65 (CPFHHEKTPSFSVSQDKQIYKCFGC). In terms of domain architecture, Toprim spans 255–336 (DTIIIVEGYM…DIKIIKIPDG (82 aa)). 3 residues coordinate Mg(2+): Glu-261, Asp-305, and Asp-307.

This sequence belongs to the DnaG primase family. In terms of assembly, monomer. Interacts with DnaB. It depends on Zn(2+) as a cofactor. Mg(2+) is required as a cofactor.

The enzyme catalyses ssDNA + n NTP = ssDNA/pppN(pN)n-1 hybrid + (n-1) diphosphate.. Its function is as follows. RNA polymerase that catalyzes the synthesis of short RNA molecules used as primers for DNA polymerase during DNA replication. The polypeptide is DNA primase (Clostridium acetobutylicum (strain ATCC 824 / DSM 792 / JCM 1419 / IAM 19013 / LMG 5710 / NBRC 13948 / NRRL B-527 / VKM B-1787 / 2291 / W)).